A 365-amino-acid chain; its full sequence is 3-galactosyl-N-acetylglucosaminide 4-alpha-L-fucosyltransferase FUT3 (365 aa).

Over 1–15 the chain is Cytoplasmic; sequence MYPPGCAKVKCSWHH. A helical; Signal-anchor for type II membrane protein membrane pass occupies residues 16 to 34; it reads CLPGLLLQLLLALCFFSYL. Residues 35–365 are Lumenal-facing; that stretch reads RMSQEKPKPK…TVPSIASWFQ (331 aa). N-linked (GlcNAc...) asparagine glycosylation is found at Asn-100, Asn-158, and Asn-189.

The protein belongs to the glycosyltransferase 10 family. In terms of processing, glycosylated. As to expression, liver, kidney, lung and brain.

Its subcellular location is the golgi apparatus. It localises to the golgi stack membrane. It carries out the reaction a beta-D-galactosyl-(1-&gt;3)-N-acetyl-beta-D-glucosaminyl derivative + GDP-beta-L-fucose = a beta-D-galactosyl-(1-&gt;3)-[alpha-L-fucosyl-(1-&gt;4)]-N-acetyl-beta-D-glucosaminyl derivative + GDP + H(+). The catalysed reaction is an N-acetyl-alpha-neuraminyl-(2-&gt;3)-beta-D-galactosyl-(1-&gt;4)-N-acetyl-beta-D-glucosaminyl derivative + GDP-beta-L-fucose = an alpha-Neu5Ac-(2-&gt;3)-beta-D-Gal-(1-&gt;4)-[alpha-L-Fuc-(1-&gt;3)]-beta-D-GlcNAc derivative + GDP + H(+). The enzyme catalyses a beta-D-galactosyl-(1-&gt;4)-N-acetyl-beta-D-glucosaminyl derivative + GDP-beta-L-fucose = a beta-D-galactosyl-(1-&gt;4)-[alpha-L-fucosyl-(1-&gt;3)]-N-acetyl-beta-D-glucosaminyl derivative + GDP + H(+). It catalyses the reaction an alpha-Neu5Ac-(2-&gt;3)-beta-D-Gal-(1-&gt;4)-beta-D-GlcNAc-(1-&gt;3)-beta-D-Gal-(1-&gt;4)-[alpha-L-Fuc-(1-&gt;3)]-beta-D-GlcNAc derivative + GDP-beta-L-fucose = an alpha-Neu5Ac-(2-&gt;3)-beta-D-Gal-(1-&gt;4)-[alpha-L-Fuc-(1-&gt;3)]-beta-D-GlcNAc-(1-&gt;3)-beta-D-Gal-(1-&gt;4)-[alpha-L-Fuc-(1-&gt;3)]-beta-D-GlcNAc derivative + GDP + H(+). It carries out the reaction Lc4Cer + GDP-beta-L-fucose = a lactoside III(4)-a-Fuc-Lc4Cer + GDP + H(+). The catalysed reaction is a beta-D-Gal-(1-&gt;3)-beta-D-GlcNAc-(1-&gt;3)-beta-D-Gal-(1-&gt;4)-beta-D-Glc-(1&lt;-&gt;1')-Cer(d18:1(4E)) + GDP-beta-L-fucose = a III(4)-a-Fuc-Lc4Cer(d18:1(4E)) + GDP + H(+). The enzyme catalyses N-acetyl-alpha-neuraminosyl-(2-&gt;3)-beta-D-galactosyl-(1-&gt;3)-[N-acetyl-alpha-neuraminosyl-(2-&gt;6)]-N-acetyl-beta-D-glucosaminyl-(1-&gt;3)-beta-D-galactosyl-(1-&gt;4)-beta-D-glucosyl-(1&lt;-&gt;1')-N-acyl-sphing-4-enine + GDP-beta-L-fucose = N-acetyl-alpha-neuraminosyl-(2-&gt;3)-beta-D-galactosyl-(1-&gt;3)-alpha-L-fucosyl-(1-&gt;4)-[N-acetyl-alpha-neuraminosyl-(2-&gt;6)-N-acetyl-beta-D-glucosaminyl-(1-&gt;3)]-beta-D-galactosyl-(1-&gt;4)-beta-D-glucosyl-(1&lt;-&gt;1')-N-acyl-sphing-4-enine + GDP + H(+). It catalyses the reaction N-acetyl-alpha-neuraminosyl-(2-&gt;3)-beta-D-galactosyl-(1-&gt;3)-N-acetyl-beta-D-glucosaminyl-(1-&gt;3)-beta-D-galactosyl-(1-&gt;4)-beta-D-glucosyl-(1&lt;-&gt;1')-N-acyl-sphing-4-enine + GDP-beta-L-fucose = N-acetyl-alpha-neuraminosyl-(2-&gt;3)-beta-D-galactosyl-(1-&gt;3)-alpha-L-fucosyl-(1-&gt;4)-[N-acetyl-beta-D-glucosaminyl-(1-&gt;3)]-beta-D-galactosyl-(1-&gt;4)-beta-D-glucosyl-(1&lt;-&gt;1')-N-acyl-sphing-4-enine + GDP + H(+). It carries out the reaction beta-D-galactosyl-(1-&gt;3)-N-acetyl-D-glucosamine + GDP-beta-L-fucose = beta-D-galactosyl-(1-&gt;3)-[alpha-L-fucosyl-(1-&gt;4)]-N-acetyl-D-glucosamine + GDP + H(+). The catalysed reaction is alpha-L-Fuc-(1-&gt;2)-beta-D-Gal-(1-&gt;3)-D-GlcNAc + GDP-beta-L-fucose = alpha-L-Fuc-(1-&gt;2)-beta-D-Gal-(1-&gt;3)-[alpha-L-Fuc-(1-&gt;4)]-D-GlcNAc + GDP + H(+). The enzyme catalyses alpha-L-Fuc-(1-&gt;2)-beta-D-Gal-(1-&gt;4)-D-GlcNAc + GDP-beta-L-fucose = alpha-L-Fuc-(1-&gt;2)-beta-D-Gal-(1-&gt;4)-[alpha-L-Fuc-(1-&gt;3)]-D-GlcNAc + GDP + H(+). It catalyses the reaction beta-D-galactosyl-(1-&gt;4)-N-acetyl-D-glucosamine + GDP-beta-L-fucose = beta-D-galactosyl-(1-&gt;4)-[alpha-L-fucosyl-(1-&gt;3)]-N-acetyl-D-glucosamine + GDP + H(+). It carries out the reaction lactose + GDP-beta-L-fucose = beta-D-galactosyl-(1-&gt;4)-[alpha-L-fucosyl-(1-&gt;3)]-D-glucose + GDP + H(+). The catalysed reaction is an alpha-Neu5Ac-(2-&gt;3)-beta-D-Gal-(1-&gt;3)-D-GlcNAc derivative + GDP-beta-L-fucose = an alpha-Neu5Ac-(2-&gt;3)-beta-D-Gal-(1-&gt;3)-[alpha-L-Fuc-(1-&gt;4)]-beta-D-GlcNAc derivative + GDP + H(+). It functions in the pathway protein modification; protein glycosylation. Catalyzes the transfer of L-fucose, from a guanosine diphosphate-beta-L-fucose, to both the subterminal N-acetyl glucosamine (GlcNAc) of type 1 chain (beta-D-Gal-(1-&gt;3)-beta-D-GlcNAc) glycolipids and oligosaccharides via an alpha(1,4) linkage, and the subterminal glucose (Glc) or GlcNAc of type 2 chain (beta-D-Gal-(1-&gt;4)-beta-D-GlcNAc) oligosaccharides via an alpha(1,3) linkage, independently of the presence of terminal alpha-L-fucosyl-(1,2) moieties on the terminal galactose of these acceptors and participates in the blood groups Lewis determination and expression of Lewis a (Le(a)), lewis b (Le(b)), Lewis x/SSEA-1 (Le(x)) and lewis y (Le(y)) antigens. Also catalyzes the transfer of L-fucose to subterminal GlcNAc of sialyl- and disialyl-lactotetraosylceramide to produce sialyl Lewis a (sLe(a)) and disialyl Lewis a via an alpha(1,4) linkage and therefore may regulate cell surface sialyl Lewis a expression and consequently regulates adhesive properties to E-selectin, cell proliferation and migration. Catalyzes the transfer of an L-fucose to 3'-sialyl-N-acetyllactosamine by an alpha(1,3) linkage, which allows the formation of sialyl-Lewis x structure and therefore may regulate the sialyl-Lewis x surface antigen expression and consequently adhesive properties to E-selectin. Prefers type 1 chain over type 2 acceptors. Type 1 tetrasaccharide is a better acceptor than type 1 disaccharide suggesting that a beta anomeric configuration of GlcNAc in the substrate is preferred. Lewis-positive (Le(+)) individuals have an active enzyme while Lewis-negative (Le(-)) individuals have an inactive enzyme. This is 3-galactosyl-N-acetylglucosaminide 4-alpha-L-fucosyltransferase FUT3 from Bos taurus (Bovine).